The chain runs to 204 residues: Protein Mis18-alpha (204 aa).

Serine 13, serine 16, and serine 17 each carry phosphoserine. One can recognise a Mis18 domain in the interval 51–149; it reads PLVFLCARCR…SVEAVESYTL (99 aa). Residues cysteine 56, cysteine 59, cysteine 112, and cysteine 115 each contribute to the Zn(2+) site. Residue lysine 133 forms a Glycyl lysine isopeptide (Lys-Gly) (interchain with G-Cter in SUMO2) linkage. Serine 204 bears the Phosphoserine mark.

Belongs to the mis18 family. Homodimer, and heterodimer with OIP5/MIS18B. Identified in a complex containing MIS18A, OIP5/MIS18B, MIS18BP1, RBBP7 and RBBP4.

Its subcellular location is the nucleus. The protein localises to the chromosome. It is found in the centromere. In terms of biological role, required for recruitment of CENPA to centromeres and normal chromosome segregation during mitosis. The protein is Protein Mis18-alpha (Mis18a) of Mus musculus (Mouse).